The sequence spans 472 residues: Glutamate-1-semialdehyde 2,1-aminomutase 2, chloroplastic (472 aa).

A chloroplast-targeting transit peptide spans Met1 to Ser36. Residue Lys312 is modified to N6-(pyridoxal phosphate)lysine.

This sequence belongs to the class-III pyridoxal-phosphate-dependent aminotransferase family. HemL subfamily. Homodimer. Pyridoxal 5'-phosphate is required as a cofactor. In terms of tissue distribution, expressed in leaf primordia and shoot apical meristems (SAM).

It localises to the plastid. The protein localises to the chloroplast. The catalysed reaction is (S)-4-amino-5-oxopentanoate = 5-aminolevulinate. It participates in porphyrin-containing compound metabolism; protoporphyrin-IX biosynthesis; 5-aminolevulinate from L-glutamyl-tRNA(Glu): step 2/2. The protein operates within porphyrin-containing compound metabolism; chlorophyll biosynthesis. Its function is as follows. Transaminase converting glutamate 1-semialdehyde (GSA) to 5-aminolevulinate (ALA). Involved in the biosynthesis of tetrapyrroles. In Arabidopsis thaliana (Mouse-ear cress), this protein is Glutamate-1-semialdehyde 2,1-aminomutase 2, chloroplastic.